The following is a 259-amino-acid chain: E3 ubiquitin-protein ligase RNF170 (259 aa).

Residues 1 to 25 are Lumenal-facing; that stretch reads MAKYQGEVQSLKLDDDSVIEGVSDQ. The chain crosses the membrane as a helical span at residues 26–46; sequence VLVAVVVSLALIATLVYALFS. Residues 47 to 202 lie on the Cytoplasmic side of the membrane; the sequence is RNAHQNIHPE…GGLFWMFRIR (156 aa). The RING-type zinc finger occupies 88-131; that stretch reads CPICLHQASLPVETNCGHLFCGTCIVAYWRYGSWLGAISCPICR. A helical membrane pass occupies residues 203–223; the sequence is IILCLMGAFFYLISPLDFVPE. Position 224 (Ala-224) is a topological domain, lumenal. A helical membrane pass occupies residues 225-245; sequence LFGILGFLDDFFVIFLLLIYI. Over 246 to 259 the chain is Cytoplasmic; that stretch reads SIMYREVITQRLNR.

In terms of assembly, constitutively associated with the ERLIN1/ERLIN 2 complex. Interacts with activated ITPR1.

Its subcellular location is the endoplasmic reticulum membrane. The catalysed reaction is S-ubiquitinyl-[E2 ubiquitin-conjugating enzyme]-L-cysteine + [acceptor protein]-L-lysine = [E2 ubiquitin-conjugating enzyme]-L-cysteine + N(6)-ubiquitinyl-[acceptor protein]-L-lysine.. The protein operates within protein modification; protein ubiquitination. Functionally, E3 ubiquitin-protein ligase. Plays an essential role in stimulus-induced inositol 1,4,5-trisphosphate receptor type 1 (ITPR1) ubiquitination and degradation via the endoplasmic reticulum-associated degradation (ERAD) pathway. Also involved in ITPR1 turnover in resting cells. Selectively inhibits the TLR3-triggered innate immune response by promoting the 'Lys-48'-linked polyubiquitination and degradation of TLR3. The sequence is that of E3 ubiquitin-protein ligase RNF170 (RNF170) from Bos taurus (Bovine).